Consider the following 128-residue polypeptide: Azurin (128 aa).

The 128-residue stretch at 1-128 (AECKVTVDST…SMMKGTVTLK (128 aa)) folds into the Plastocyanin-like domain. The cysteines at positions 3 and 26 are disulfide-linked. Positions 46, 112, 117, and 121 each coordinate Cu cation.

The protein resides in the periplasm. Functionally, transfers electrons from cytochrome c551 to cytochrome oxidase. This chain is Azurin, found in Pseudomonas putida (Arthrobacter siderocapsulatus).